The following is an 848-amino-acid chain: Adenylate cyclase (848 aa).

Residues M1 to L535 are catalytic. Positions K541–H848 are regulatory.

The protein belongs to the adenylyl cyclase class-1 family.

It localises to the cytoplasm. It carries out the reaction ATP = 3',5'-cyclic AMP + diphosphate. The regulatory domain is involved in the regulation of cyclase activity by the carbon source. This is Adenylate cyclase (cya) from Yersinia intermedia.